Reading from the N-terminus, the 383-residue chain is Lipid-A-disaccharide synthase (383 aa).

Belongs to the LpxB family.

It carries out the reaction a lipid X + a UDP-2-N,3-O-bis[(3R)-3-hydroxyacyl]-alpha-D-glucosamine = a lipid A disaccharide + UDP + H(+). The protein operates within bacterial outer membrane biogenesis; LPS lipid A biosynthesis. Functionally, condensation of UDP-2,3-diacylglucosamine and 2,3-diacylglucosamine-1-phosphate to form lipid A disaccharide, a precursor of lipid A, a phosphorylated glycolipid that anchors the lipopolysaccharide to the outer membrane of the cell. The polypeptide is Lipid-A-disaccharide synthase (Myxococcus xanthus (strain DK1622)).